We begin with the raw amino-acid sequence, 396 residues long: Probable 20S rRNA accumulation protein 4 (396 aa).

Belongs to the TSR4 family.

The protein resides in the cytoplasm. The protein localises to the nucleus. It is found in the nucleolus. Functionally, required for processing of the 20S pre-rRNA at site D to generate mature 18S rRNA. This Schizosaccharomyces pombe (strain 972 / ATCC 24843) (Fission yeast) protein is Probable 20S rRNA accumulation protein 4.